We begin with the raw amino-acid sequence, 510 residues long: Serine/threonine-protein kinase RIO3 (510 aa).

Disordered regions lie at residues 100–126 and 143–191; these read GSSSSVHFTPDRYHPKTMQETDSENED and DEEN…DMVG. 2 stretches are compositionally biased toward basic and acidic residues: residues 108–118 and 162–179; these read TPDRYHPKTMQ and TKHDTGVSGRRNADKTFN. A Protein kinase domain is found at 235-510; the sequence is LLLLKWINQG…RGISPAREYN (276 aa). Residues 241 to 249 and lysine 275 each bind ATP; that span reads INQGVFDSV. Aspartate 388 acts as the Proton acceptor in catalysis. The segment covering 474 to 499 has biased composition (basic and acidic residues); it reads RSVDLRHDKSRPADMELKKYNEEKKA. Residues 474–510 form a disordered region; the sequence is RSVDLRHDKSRPADMELKKYNEEKKANRGISPAREYN.

It belongs to the protein kinase superfamily. RIO-type Ser/Thr kinase family. Mg(2+) is required as a cofactor. As to expression, expressed in tail neurons (PVQ and PHAL/PQR).

It carries out the reaction L-seryl-[protein] + ATP = O-phospho-L-seryl-[protein] + ADP + H(+). The catalysed reaction is L-threonyl-[protein] + ATP = O-phospho-L-threonyl-[protein] + ADP + H(+). This is Serine/threonine-protein kinase RIO3 (riok-3) from Caenorhabditis elegans.